Consider the following 41-residue polypeptide: Ranatuerin-2PLg (41 aa).

A propeptide spanning residues 1 to 11 (DDGVEMTEEEV) is cleaved from the precursor. Cys-36 and Cys-41 are disulfide-bonded.

This sequence belongs to the frog skin active peptide (FSAP) family. Ranatuerin subfamily.

The protein localises to the secreted. In terms of biological role, antimicrobial peptide. The chain is Ranatuerin-2PLg from Lithobates palustris (Pickerel frog).